Consider the following 46-residue polypeptide: Phoratoxin (46 aa).

3 disulfide bridges follow: cysteine 3/cysteine 40, cysteine 4/cysteine 32, and cysteine 16/cysteine 26. Position 46 is a blocked carboxyl end (His) (histidine 46).

The protein belongs to the plant thionin (TC 1.C.44) family.

It is found in the secreted. Functionally, thionins are small plant proteins which are toxic to animal cells. They seem to exert their toxic effect at the level of the cell membrane. Their precise function is not known. This chain is Phoratoxin, found in Phoradendron leucarpum subsp. tomentosum (California mistletoe).